A 468-amino-acid chain; its full sequence is Glutamate--tRNA ligase (468 aa).

The 'HIGH' region signature appears at 8–18; sequence PSPTGFLHVGG. The Zn(2+) site is built by cysteine 97, cysteine 99, cysteine 124, and aspartate 126. Positions 236-240 match the 'KMSKS' region motif; that stretch reads KLSKR. Residue lysine 239 coordinates ATP.

Belongs to the class-I aminoacyl-tRNA synthetase family. Glutamate--tRNA ligase type 1 subfamily. Monomer. Requires Zn(2+) as cofactor.

It is found in the cytoplasm. The catalysed reaction is tRNA(Glu) + L-glutamate + ATP = L-glutamyl-tRNA(Glu) + AMP + diphosphate. Functionally, catalyzes the attachment of glutamate to tRNA(Glu) in a two-step reaction: glutamate is first activated by ATP to form Glu-AMP and then transferred to the acceptor end of tRNA(Glu). The polypeptide is Glutamate--tRNA ligase (Francisella tularensis subsp. holarctica (strain FTNF002-00 / FTA)).